Reading from the N-terminus, the 131-residue chain is Snaclec coagulation factor IX/factor X-binding protein subunit A (131 aa).

A C-type lectin domain is found at 1–131 (DCLPGWSSHE…EEPQRFTCEI (131 aa)). Cystine bridges form between Cys-2-Cys-13, Cys-30-Cys-129, and Cys-104-Cys-121. Residues Ser-41, Glu-43, and Glu-47 each coordinate Ca(2+). Glu-130 lines the Ca(2+) pocket.

It belongs to the snaclec family. As to quaternary structure, heterodimer of subunits A and B; disulfide-linked. Expressed by the venom gland.

It is found in the secreted. Anticoagulant protein which binds to coagulation factor IX (F9) and coagulation factor X (F10) in the presence of calcium. It may bind the gamma-carboxyglutamic acid-domain regions of factors with a 1 to 1 stoichiometry. The dissociation constant (K(d)) are 6.6 nM for factor IX (F9) and 125 nM for factor X (F10). Does not bind carbohydrates. The protein is Snaclec coagulation factor IX/factor X-binding protein subunit A of Echis carinatus (Saw-scaled viper).